We begin with the raw amino-acid sequence, 564 residues long: MSININMPAAAVLRPFRCSQLHVDETRRSGNYRPSAWDSNYIQSLNSQYKEKKCLTRLEGLIEQVKELKGTKMEAVQQLELIDDSQNLGLSYYFQDKIKHILNLIYNDHKYFYDSEAEGMDLYFTALGFRLFRQHGFKVSQEVFDRFKNENGTYFKHDDTKGLLQLYEASFLVREGEETLEQAREFATKSLQRKLDEDGDGIDANIESWIRHSLEIPLHWRAQRLEARWFLDAYARRPDMNPVIFELAKLNFNIVQATQQEELKALSRWWSSLGLAEKLPFVRDRLVESYFWAIPLFEPHQYGYQRKVATKIITLITSLDDVYDIYGTLDELQLFTNLFERWDNASIGRLPEYLQLFYFAIHNFVSEVAYDILKEKGFTSIVYLQRSWVDLLKGYLKEAKWYNSGYTPSLEEYFDNAFMTIGAPPVLSQAYFTLGSSMEKPIIESMYEYDNILRVSGMLVRLPDDLGTSSFEMERGDVPKSVQLYMKETNATEEEAVEHVRFLNREAWKKMNTAEAAGDSPLVSDVVAVAANLGRAAQFMYFDGDGNQSSLQQWIVSMLFEPYA.

Positions 320, 324, 464, 468, and 472 each coordinate Mg(2+). The short motif at 320-324 is the DDXXD motif element; it reads DDVYD.

This sequence belongs to the terpene synthase family. It depends on Mg(2+) as a cofactor. Mn(2+) serves as cofactor.

The enzyme catalyses (2E)-geranyl diphosphate + H2O = (R)-linalool + diphosphate. Specifically catalyzes production of (R)-(-)-linalool, the main component of lavender essential oil. The chain is R-linalool synthase from Lavandula angustifolia (Lavender).